The following is an 897-amino-acid chain: F-BAR domain only protein 1 (897 aa).

The segment at 1-276 (MIHFFHTLQG…VGFEEYLSSL (276 aa)) is mediates membrane-binding. Positions 2–248 (IHFFHTLQGE…NVENIGIENL (247 aa)) constitute an F-BAR domain. A coiled-coil region spans residues 134 to 154 (LQKTREGYHSKCVELERLRKE). Residues 475–537 (VEDSGLDSPS…PNPAPSSQSN (63 aa)) are disordered. A compositionally biased stretch (polar residues) spans 501–520 (PSSQSQSKDSINAASQSRGG). An MHD domain is found at 630–894 (SWPVAAAITE…RFATGKYMAG (265 aa)).

It belongs to the FCHO family. As to quaternary structure, may oligomerize and form homotetramer. Interacts with acvr1l/alk8; linking this receptor to clathrin-mediated endocytosis.

It localises to the membrane. The protein localises to the clathrin-coated pit. May function in an early step of clathrin-mediated endocytosis. May regulate Bmp signaling by regulating clathrin-mediated endocytosis of Bmp receptors. In Danio rerio (Zebrafish), this protein is F-BAR domain only protein 1 (fcho1).